The chain runs to 91 residues: Small membrane A-kinase anchor protein (91 aa).

Gly2 carries N-myristoyl glycine lipidation.

It belongs to the small membrane AKAP family. In terms of processing, may be palmitoylated at Cys-3.

The protein localises to the cell membrane. Its function is as follows. Binds to type I regulatory subunits of protein kinase A and may anchor/target them to the plasma membrane. The protein is Small membrane A-kinase anchor protein of Xenopus tropicalis (Western clawed frog).